The primary structure comprises 265 residues: Type III pantothenate kinase (265 aa).

Residue 6 to 13 (DVGNTHTV) coordinates ATP. Position 112–115 (112–115 (GADR)) interacts with substrate. Aspartate 114 functions as the Proton acceptor in the catalytic mechanism. Aspartate 134 is a K(+) binding site. Position 137 (threonine 137) interacts with ATP. Threonine 189 contributes to the substrate binding site.

The protein belongs to the type III pantothenate kinase family. Homodimer. It depends on NH4(+) as a cofactor. K(+) is required as a cofactor.

The protein localises to the cytoplasm. It carries out the reaction (R)-pantothenate + ATP = (R)-4'-phosphopantothenate + ADP + H(+). The protein operates within cofactor biosynthesis; coenzyme A biosynthesis; CoA from (R)-pantothenate: step 1/5. Its function is as follows. Catalyzes the phosphorylation of pantothenate (Pan), the first step in CoA biosynthesis. The chain is Type III pantothenate kinase from Streptomyces coelicolor (strain ATCC BAA-471 / A3(2) / M145).